The sequence spans 318 residues: Glycine--tRNA ligase alpha subunit (318 aa).

This sequence belongs to the class-II aminoacyl-tRNA synthetase family. As to quaternary structure, tetramer of two alpha and two beta subunits.

The protein localises to the cytoplasm. The enzyme catalyses tRNA(Gly) + glycine + ATP = glycyl-tRNA(Gly) + AMP + diphosphate. This chain is Glycine--tRNA ligase alpha subunit, found in Methylibium petroleiphilum (strain ATCC BAA-1232 / LMG 22953 / PM1).